A 362-amino-acid polypeptide reads, in one-letter code: dTDP-glucose 4,6-dehydratase (362 aa).

NAD(+) contacts are provided by residues 11 to 12 (FI), 32 to 35 (DKLT), 58 to 59 (DI), 80 to 84 (LAAES), and threonine 99. Serine 84 lines the substrate pocket. Residue threonine 133 coordinates substrate. The active-site Proton donor is aspartate 134. Residues glutamate 135 and tyrosine 167 each act as proton acceptor in the active site. Residue 167–171 (YSASK) coordinates NAD(+). Asparagine 196 serves as a coordination point for substrate. Asparagine 197 is a binding site for NAD(+). Substrate-binding positions include 206–207 (KL), 222–224 (PVY), arginine 231, asparagine 266, and 300–304 (DRPGH).

The protein belongs to the NAD(P)-dependent epimerase/dehydratase family. dTDP-glucose dehydratase subfamily. Requires NAD(+) as cofactor.

The catalysed reaction is dTDP-alpha-D-glucose = dTDP-4-dehydro-6-deoxy-alpha-D-glucose + H2O. It functions in the pathway bacterial outer membrane biogenesis; LPS O-antigen biosynthesis. In terms of biological role, catalyzes the dehydration of dTDP-D-glucose to form dTDP-4-dehydro-6-deoxy-D-glucose via a three-step process involving oxidation, dehydration and reduction. This reaction is a step in the biosynthesis of D-fucofuranose, a component of E.coli O52 O antigen. The protein is dTDP-glucose 4,6-dehydratase (rmlB) of Escherichia coli.